Consider the following 383-residue polypeptide: 8-amino-7-oxononanoate synthase (383 aa).

R20 provides a ligand contact to substrate. A pyridoxal 5'-phosphate-binding site is contributed by 107-108 (GY). Residue H132 participates in substrate binding. The pyridoxal 5'-phosphate site is built by S178, H206, and T233. N6-(pyridoxal phosphate)lysine is present on K236. Residue T349 participates in substrate binding.

It belongs to the class-II pyridoxal-phosphate-dependent aminotransferase family. BioF subfamily. Homodimer. Pyridoxal 5'-phosphate is required as a cofactor.

It carries out the reaction 6-carboxyhexanoyl-[ACP] + L-alanine + H(+) = (8S)-8-amino-7-oxononanoate + holo-[ACP] + CO2. It functions in the pathway cofactor biosynthesis; biotin biosynthesis. Its function is as follows. Catalyzes the decarboxylative condensation of pimeloyl-[acyl-carrier protein] and L-alanine to produce 8-amino-7-oxononanoate (AON), [acyl-carrier protein], and carbon dioxide. The protein is 8-amino-7-oxononanoate synthase of Chromobacterium violaceum (strain ATCC 12472 / DSM 30191 / JCM 1249 / CCUG 213 / NBRC 12614 / NCIMB 9131 / NCTC 9757 / MK).